A 145-amino-acid polypeptide reads, in one-letter code: Large ribosomal subunit protein uL13 (145 aa).

The protein belongs to the universal ribosomal protein uL13 family. As to quaternary structure, part of the 50S ribosomal subunit.

Functionally, this protein is one of the early assembly proteins of the 50S ribosomal subunit, although it is not seen to bind rRNA by itself. It is important during the early stages of 50S assembly. This chain is Large ribosomal subunit protein uL13, found in Haloquadratum walsbyi (strain DSM 16790 / HBSQ001).